A 285-amino-acid chain; its full sequence is MSTNTESSSYSSLPSQRLLGKVALITGGATGIGESIVRLFHKHGAKVCIVDLQDDLGGEVCKSLLRGESKETAFFIHGDVRVEDDISNAVDFAVKNFGTLDILINNAGLCGAPCPDIRNYSLSEFEMTFDVNVKGAFLSMKHAARVMIPEKKGSIVSLCSVGGVVGGVGPHSYVGSKHAVLGLTRSVAAELGQHGIRVNCVSPYAVATKLALAHLPEEERTEDAFVGFRNFAAANANLKGVELTVDDVANAVLFLASDDSRYISGDNLMIDGGFTCTNHSFKVFR.

S2 is modified (N-acetylserine).

The protein belongs to the short-chain dehydrogenases/reductases (SDR) family. As to expression, predominantly in roots and stems, and at lower levels in leaves and seeds.

The protein localises to the cytoplasm. It catalyses the reaction 2-cis,4-trans-xanthoxin + NAD(+) = 2-cis-(+)-abscisic aldehyde + NADH + H(+). The enzyme catalyses 2-trans,4-trans-xanthoxin + NAD(+) = 2-trans-(+)-abscisic aldehyde + NADH + H(+). Functionally, involved in the biosynthesis of abscisic acid. Catalyzes the conversion of xanthoxin to abscisic aldehyde. The sequence is that of Xanthoxin dehydrogenase from Arabidopsis thaliana (Mouse-ear cress).